We begin with the raw amino-acid sequence, 471 residues long: Anthocyanidin 3-O-glucosyltransferase (471 aa).

Residue H24 is the Proton acceptor of the active site. An an anthocyanidin-binding site is contributed by H24. D130 serves as the catalytic Charge relay. Residue T152 participates in UDP-alpha-D-glucose binding. Residue H161 coordinates an anthocyanidin. A352, Q354, H369, W372, S374, and E377 together coordinate UDP-alpha-D-glucose. G392 lines the an anthocyanidin pocket. Residues D393 and Q394 each contribute to the UDP-alpha-D-glucose site.

Belongs to the UDP-glycosyltransferase family.

The enzyme catalyses an anthocyanidin + UDP-alpha-D-glucose + H(+) = an anthocyanidin 3-O-beta-D-glucoside + UDP. The protein operates within pigment biosynthesis; anthocyanin biosynthesis. Functionally, in the presence of other necessary color factors, this glycosylation reaction allows the accumulation of anthocyanin pigments. The polypeptide is Anthocyanidin 3-O-glucosyltransferase (BZ1) (Zea mays (Maize)).